The chain runs to 408 residues: Digeranylgeranylglycerophospholipid reductase 1 (408 aa).

Positions 15, 34, 45, 46, 48, 99, 123, 279, 291, and 292 each coordinate FAD.

This sequence belongs to the geranylgeranyl reductase family. DGGGPL reductase subfamily. It depends on FAD as a cofactor.

The catalysed reaction is a 2,3-bis-O-phytanyl-sn-glycerol 1-phospholipid + 8 oxidized 2[4Fe-4S]-[ferredoxin] = a 2,3-bis-O-(geranylgeranyl)-sn-glycerol 1-phospholipid + 8 reduced 2[4Fe-4S]-[ferredoxin] + 16 H(+). It carries out the reaction 2,3-bis-O-(phytanyl)-sn-glycerol 1-phosphate + 8 oxidized 2[4Fe-4S]-[ferredoxin] = 2,3-bis-O-(geranylgeranyl)-sn-glycerol 1-phosphate + 8 reduced 2[4Fe-4S]-[ferredoxin] + 16 H(+). It catalyses the reaction a 2,3-bis-O-phytanyl-sn-glycerol 1-phospholipid + 8 A = a 2,3-bis-O-(geranylgeranyl)-sn-glycerol 1-phospholipid + 8 AH2. The enzyme catalyses CDP-2,3-bis-O-(geranylgeranyl)-sn-glycerol + 8 AH2 = CDP-2,3-bis-O-(phytanyl)-sn-glycerol + 8 A. The catalysed reaction is archaetidylserine + 8 AH2 = 2,3-bis-O-phytanyl-sn-glycero-3-phospho-L-serine + 8 A. It functions in the pathway membrane lipid metabolism; glycerophospholipid metabolism. Its function is as follows. Is involved in the reduction of 2,3-digeranylgeranylglycerophospholipids (unsaturated archaeols) into 2,3-diphytanylglycerophospholipids (saturated archaeols) in the biosynthesis of archaeal membrane lipids. Catalyzes the formation of archaetidic acid (2,3-di-O-phytanyl-sn-glyceryl phosphate) from 2,3-di-O-geranylgeranylglyceryl phosphate (DGGGP) via the hydrogenation of each double bond of the isoprenoid chains. Is also probably able to reduce double bonds of geranyl groups in CDP-2,3-bis-O-(geranylgeranyl)-sn-glycerol and archaetidylserine, thus acting at various stages in the biosynthesis of archaeal membrane lipids. In Methanococcoides burtonii (strain DSM 6242 / NBRC 107633 / OCM 468 / ACE-M), this protein is Digeranylgeranylglycerophospholipid reductase 1.